The sequence spans 316 residues: Ribosomal RNA small subunit methyltransferase H (316 aa).

S-adenosyl-L-methionine-binding positions include 37–39, D56, F83, D106, and H113; that span reads GGH. The disordered stretch occupies residues 276–316; the sequence is PILPSEEETKENPASRSAKLRVLRKTKSADKKYKKENSKEE. The span at 302–316 shows a compositional bias: basic and acidic residues; it reads KSADKKYKKENSKEE.

This sequence belongs to the methyltransferase superfamily. RsmH family.

It localises to the cytoplasm. It carries out the reaction cytidine(1402) in 16S rRNA + S-adenosyl-L-methionine = N(4)-methylcytidine(1402) in 16S rRNA + S-adenosyl-L-homocysteine + H(+). Its function is as follows. Specifically methylates the N4 position of cytidine in position 1402 (C1402) of 16S rRNA. In Leptospira borgpetersenii serovar Hardjo-bovis (strain L550), this protein is Ribosomal RNA small subunit methyltransferase H.